Consider the following 110-residue polypeptide: Large ribosomal subunit protein uL24 (110 aa).

The protein belongs to the universal ribosomal protein uL24 family. Part of the 50S ribosomal subunit.

In terms of biological role, one of two assembly initiator proteins, it binds directly to the 5'-end of the 23S rRNA, where it nucleates assembly of the 50S subunit. Its function is as follows. One of the proteins that surrounds the polypeptide exit tunnel on the outside of the subunit. In Ureaplasma parvum serovar 3 (strain ATCC 27815 / 27 / NCTC 11736), this protein is Large ribosomal subunit protein uL24.